Reading from the N-terminus, the 523-residue chain is 26S proteasome regulatory subunit RPN3 (523 aa).

A2 bears the N-acetylalanine mark. Positions 270–450 (ARYFFYLSKI…GFIETTELLN (181 aa)) constitute a PCI domain. S454 is modified (phosphoserine). A compositionally biased stretch (basic and acidic residues) spans 480–495 (RYPEDKKTQQNEKSEN). Residues 480–523 (RYPEDKKTQQNEKSENGENDDDTLDGDLMDDMSDISDLDDLGFL) form a disordered region. Acidic residues predominate over residues 496–523 (GENDDDTLDGDLMDDMSDISDLDDLGFL).

The protein belongs to the proteasome subunit S3 family. In terms of assembly, the 26S proteasome is composed of a core protease, known as the 20S proteasome, capped at one or both ends by the 19S regulatory complex (RC). The RC is composed of at least 18 different subunits in two subcomplexes, the base and the lid, which form the portions proximal and distal to the 20S proteolytic core, respectively. N-acetylated by NAT1.

Functionally, acts as a regulatory subunit of the 26S proteasome which is involved in the ATP-dependent degradation of ubiquitinated proteins. The chain is 26S proteasome regulatory subunit RPN3 (RPN3) from Saccharomyces cerevisiae (strain ATCC 204508 / S288c) (Baker's yeast).